A 600-amino-acid polypeptide reads, in one-letter code: Isocitrate dehydrogenase kinase/phosphatase (600 aa).

ATP contacts are provided by residues 335–341 (APGIRGM) and Lys-356. Residue Asp-390 is part of the active site.

The protein belongs to the AceK family.

It localises to the cytoplasm. The catalysed reaction is L-seryl-[isocitrate dehydrogenase] + ATP = O-phospho-L-seryl-[isocitrate dehydrogenase] + ADP + H(+). Functionally, bifunctional enzyme which can phosphorylate or dephosphorylate isocitrate dehydrogenase (IDH) on a specific serine residue. This is a regulatory mechanism which enables bacteria to bypass the Krebs cycle via the glyoxylate shunt in response to the source of carbon. When bacteria are grown on glucose, IDH is fully active and unphosphorylated, but when grown on acetate or ethanol, the activity of IDH declines drastically concomitant with its phosphorylation. The sequence is that of Isocitrate dehydrogenase kinase/phosphatase from Bordetella parapertussis (strain 12822 / ATCC BAA-587 / NCTC 13253).